We begin with the raw amino-acid sequence, 462 residues long: MSALNNLFGNSKSDAAGTSSIAALFSKPNHVDERKVKSKARTVLTEPEQDKDEQEEENVQESASTVSEGVEKEQEEQEEQPKKKKKKTKKNDEENDNLEVQYYSKVLGDSKSKDEPKDEPKDDSSDSDNEDEATAVDKSSITGTESESAKVINLKEKELAKAERTIFIGNVPNEVITSKKVYKEFKKLLSKDPRSENDDHDDGEEDEEEEESKTKDVKFNVESIRFRSIAFEEALPRKVAFVHQKLHKSRDSINAYAVYGSSNPVKIMCQYLNGKVFNDHHLRVDSVTHPSPHDKRRSVFVGNLDFEEVEESLWKHFEPCGDIEYVRIIRDSKTNMGKGFAYVQFKDFQSVSKALLLHEKKIHEGKKARKLRISRCKNMRKAQGNQSSLQNNKLNDQQRTKLGRAKKVLGKADRAKLGEELTIEGLRASKGETTPVLKRTKNRSKTGRVTKRSIAFKKQNAQ.

Disordered regions lie at residues 24-148 (LFSK…ESES) and 191-215 (KDPR…SKTK). Positions 47–59 (PEQDKDEQEEENV) are enriched in acidic residues. Residues 108 to 124 (GDSKSKDEPKDEPKDDS) show a composition bias toward basic and acidic residues. The span at 125 to 134 (SDSDNEDEAT) shows a compositional bias: acidic residues. Residues 137–146 (DKSSITGTES) are compositionally biased toward polar residues. Acidic residues predominate over residues 198–211 (DDHDDGEEDEEEEE). An RRM domain is found at 297 to 378 (RSVFVGNLDF…RKLRISRCKN (82 aa)). Disordered stretches follow at residues 381-400 (KAQG…QQRT) and 432-462 (ETTP…QNAQ). Polar residues predominate over residues 383–397 (QGNQSSLQNNKLNDQ). Residues 438-455 (KRTKNRSKTGRVTKRSIA) are compositionally biased toward basic residues.

It belongs to the RRM RBM34 family.

The protein resides in the nucleus. Its subcellular location is the nucleolus. Involved in pre-25S rRNA processing. This chain is Nucleolar protein 12 (NOP12), found in Kluyveromyces lactis (strain ATCC 8585 / CBS 2359 / DSM 70799 / NBRC 1267 / NRRL Y-1140 / WM37) (Yeast).